The chain runs to 310 residues: B3 domain-containing transcription factor NGA1 (310 aa).

Positions 1 to 26 (MMTDLSLTRDEDEEEAKPLAEEEGAR) are disordered. A compositionally biased stretch (basic and acidic residues) spans 16-26 (AKPLAEEEGAR). The TF-B3 DNA-binding region spans 35-141 (FDKVVTPSDV…RLFIDWRRRP (107 aa)). Positions 251 to 268 (ESGMTNSTEEESSSSGGS) are enriched in low complexity. Residues 251-310 (ESGMTNSTEEESSSSGGSLPRGGGGGASSSSFFQLRLGSSSEDDHFTKKGKSSLSFDLDQ) form a disordered region.

In terms of assembly, interacts with BRX. Interacts with BZIP30.

The protein resides in the nucleus. In terms of biological role, regulates lateral organ growth. Functionally redundant with NGA2, NGA3 and NGA4. The chain is B3 domain-containing transcription factor NGA1 (NGA1) from Arabidopsis thaliana (Mouse-ear cress).